A 188-amino-acid chain; its full sequence is ATP-dependent protease subunit HslV (188 aa).

Threonine 8 is an active-site residue. Residues alanine 165, cysteine 168, and threonine 171 each coordinate Na(+).

The protein belongs to the peptidase T1B family. HslV subfamily. In terms of assembly, a double ring-shaped homohexamer of HslV is capped on each side by a ring-shaped HslU homohexamer. The assembly of the HslU/HslV complex is dependent on binding of ATP.

Its subcellular location is the cytoplasm. The enzyme catalyses ATP-dependent cleavage of peptide bonds with broad specificity.. Allosterically activated by HslU binding. Functionally, protease subunit of a proteasome-like degradation complex believed to be a general protein degrading machinery. The protein is ATP-dependent protease subunit HslV of Neorickettsia sennetsu (strain ATCC VR-367 / Miyayama) (Ehrlichia sennetsu).